The sequence spans 565 residues: DNA-directed RNA polymerase subunit beta C-terminal section (565 aa).

It belongs to the RNA polymerase beta chain family. In terms of assembly, in plastids the minimal PEP RNA polymerase catalytic core is composed of four subunits: alpha, beta, beta', and beta''. When a (nuclear-encoded) sigma factor is associated with the core the holoenzyme is formed, which can initiate transcription.

The protein resides in the plastid. It is found in the chloroplast. The catalysed reaction is RNA(n) + a ribonucleoside 5'-triphosphate = RNA(n+1) + diphosphate. Functionally, DNA-dependent RNA polymerase catalyzes the transcription of DNA into RNA using the four ribonucleoside triphosphates as substrates. In Tetradesmus obliquus (Green alga), this protein is DNA-directed RNA polymerase subunit beta C-terminal section (rpoB2).